The following is a 534-amino-acid chain: uncharacterized protein (534 aa).

This is an uncharacterized protein from Escherichia coli (strain K12).